Here is a 189-residue protein sequence, read N- to C-terminus: Calcium and integrin-binding family member 2 (189 aa).

EF-hand domains are found at residues 68-103 (RENPFRRRICEAFSRDGQGNLSFEDFLDALSVFSEQ), 105-140 (PRDIKVFYAFKIYDFDQDGFIGHADLMSCLTTMTKN), and 146-181 (EHQQIADKVIEEADVDGDGKLSILEFEHVILRAPDF). Residues aspartate 118, aspartate 120, aspartate 122, aspartate 129, aspartate 159, aspartate 161, aspartate 163, lysine 165, and glutamate 170 each coordinate Ca(2+).

In terms of assembly, monomer. Homodimer.

The protein resides in the cytoplasm. In terms of biological role, calcium- and integrin-binding protein. Plays a role in intracellular calcium homeostasis. Critical for proper photoreceptor cell maintenance and function. Required for prevention of light-dependent retinal degeneration. In Drosophila melanogaster (Fruit fly), this protein is Calcium and integrin-binding family member 2.